Here is a 460-residue protein sequence, read N- to C-terminus: Elongation factor 1-alpha-B (460 aa).

Position 2 is a n,N,N-trimethylglycine (glycine 2). Lysine 3 carries the N6,N6-dimethyllysine; alternate modification. Lysine 3 carries the N6-methyllysine; alternate modification. Residues 5–240 (KGHINVVVIG…DSIEPPARPT (236 aa)) enclose the tr-type G domain. A G1 region spans residues 14 to 21 (GHVDSGKS). 14–21 (GHVDSGKS) lines the GTP pocket. Position 30 is an N6-methyllysine (lysine 30). The tract at residues 70 to 74 (GITID) is G2. At lysine 79 the chain carries N6,N6,N6-trimethyllysine. The segment at 91–94 (DAPG) is G3. Residues 91-95 (DAPGH) and 153-156 (NKMD) contribute to the GTP site. The tract at residues 153-156 (NKMD) is G4. Residues 192 to 194 (SGF) form a G5 region. At lysine 316 the chain carries N6,N6-dimethyllysine; alternate. At lysine 316 the chain carries N6-methyllysine; alternate. N6-methyllysine is present on lysine 390.

Belongs to the TRAFAC class translation factor GTPase superfamily. Classic translation factor GTPase family. EF-Tu/EF-1A subfamily.

It is found in the cytoplasm. In terms of biological role, this protein promotes the GTP-dependent binding of aminoacyl-tRNA to the A-site of ribosomes during protein biosynthesis. This chain is Elongation factor 1-alpha-B (tef102), found in Schizosaccharomyces pombe (strain 972 / ATCC 24843) (Fission yeast).